The sequence spans 217 residues: uncharacterized protein (217 aa).

The next 6 membrane-spanning stretches (helical) occupy residues 13–35, 50–68, 75–94, 109–131, 152–174, and 194–216; these read IWLT…IALL, FSLV…ILYL, FLLA…EWRI, MMAL…LFSL, YLAI…AAAV, and GFSL…FAGL.

It localises to the cell membrane. This is an uncharacterized protein from Archaeoglobus fulgidus (strain ATCC 49558 / DSM 4304 / JCM 9628 / NBRC 100126 / VC-16).